The chain runs to 134 residues: Arsenate reductase (134 aa).

Active-site nucleophile residues include Cys-11, Cys-83, and Cys-90. Disulfide bonds link Cys-11–Cys-83 and Cys-83–Cys-90.

It belongs to the low molecular weight phosphotyrosine protein phosphatase family. Thioredoxin-coupled ArsC subfamily.

Its subcellular location is the cytoplasm. The enzyme catalyses arsenate + [thioredoxin]-dithiol + H(+) = arsenite + [thioredoxin]-disulfide + H2O. Catalyzes the reduction of arsenate [As(V)] to arsenite [As(III)]. The chain is Arsenate reductase from Bacillus cereus (strain Q1).